The sequence spans 132 residues: Small ribosomal subunit protein uS11 (132 aa).

This sequence belongs to the universal ribosomal protein uS11 family. In terms of assembly, part of the 30S ribosomal subunit.

Its function is as follows. Located on the platform of the 30S subunit. The polypeptide is Small ribosomal subunit protein uS11 (Thermoplasma volcanium (strain ATCC 51530 / DSM 4299 / JCM 9571 / NBRC 15438 / GSS1)).